We begin with the raw amino-acid sequence, 412 residues long: Multidrug resistance protein MdtG (412 aa).

The next 11 membrane-spanning stretches (helical) occupy residues 19 to 39 (LGCF…PLYV), 56 to 76 (LVFS…GGLA), 90 to 110 (LGMS…QFLL), 113 to 133 (ALLG…ATQI), 144 to 164 (TLST…GFLA), 171 to 191 (TVFF…LFLI), 222 to 242 (LFVT…ILTL), 254 to 274 (IAFI…MSAP), 288 to 308 (ILIV…FVQT), 317 to 337 (FLLG…LVYN), and 376 to 396 (AVFL…TLSL).

The protein belongs to the major facilitator superfamily. DHA1 family. MdtG (TC 2.A.1.2.20) subfamily.

It localises to the cell inner membrane. This chain is Multidrug resistance protein MdtG, found in Klebsiella pneumoniae (strain 342).